Here is a 90-residue protein sequence, read N- to C-terminus: MIYTDPTTGATTSTDAPSTNYLNRLTPNMFLTILAVVVIIALIIIFVQSSSNGNSSGGNVPPNALGGFVNPLNATMRANPFMNTPQRQML.

The chain crosses the membrane as a helical span at residues 27–47; the sequence is PNMFLTILAVVVIIALIIIFV.

It localises to the virion membrane. Its function is as follows. Component of the polyhedra envelope. Plays an essential role in the budded virus production. This chain is Protein E18 (E18), found in Autographa californica nuclear polyhedrosis virus (AcMNPV).